A 452-amino-acid polypeptide reads, in one-letter code: Exodeoxyribonuclease 7 large subunit (452 aa).

Belongs to the XseA family. In terms of assembly, heterooligomer composed of large and small subunits.

Its subcellular location is the cytoplasm. The enzyme catalyses Exonucleolytic cleavage in either 5'- to 3'- or 3'- to 5'-direction to yield nucleoside 5'-phosphates.. In terms of biological role, bidirectionally degrades single-stranded DNA into large acid-insoluble oligonucleotides, which are then degraded further into small acid-soluble oligonucleotides. The protein is Exodeoxyribonuclease 7 large subunit of Bacillus cereus (strain 03BB102).